The primary structure comprises 411 residues: Arginine deiminase (411 aa).

Cys-401 serves as the catalytic Amidino-cysteine intermediate.

The protein belongs to the arginine deiminase family.

The protein resides in the cytoplasm. The enzyme catalyses L-arginine + H2O = L-citrulline + NH4(+). The protein operates within amino-acid degradation; L-arginine degradation via ADI pathway; carbamoyl phosphate from L-arginine: step 1/2. In Staphylococcus haemolyticus (strain JCSC1435), this protein is Arginine deiminase.